We begin with the raw amino-acid sequence, 434 residues long: Zinc carboxypeptidase (434 aa).

The first 33 residues, 1-33 (MSPKRRRLMAAALGACVALVLPLHAGSAQPSTA), serve as a signal peptide directing secretion. A propeptide spans 34 to 114 (KTPERTVFEV…DFTDPQVGTQ (81 aa)) (activation peptide). The region spanning 122–423 (GYHNFQETVT…SAVELFLSYS (302 aa)) is the Peptidase M14 domain. Zn(2+) is bound by residues His183 and Glu186. The disordered stretch occupies residues 270–295 (GSSSSGSSETTAARRRSPPRRSPHPH). Over residues 282–293 (ARRRSPPRRSPH) the composition is skewed to basic residues. A Zn(2+)-binding site is contributed by His315. The active-site Proton donor/acceptor is Glu388.

The protein belongs to the peptidase M14 family. Zn(2+) is required as a cofactor.

The enzyme catalyses Releases a C-terminal residue, which may be hydrophobic or positively charged.. Carboxypeptidase that possesses the specificities of both mammalian Cpase A and B. Thus shows broad substrate specificity, being able to cleave Cbz-Gly-Leu, Cbz-Gly-Val, Cbz-Gly-Phe, Cbz-Gly-Lys and Bz-Gly-Arg in vitro. In Saccharothrix mutabilis subsp. capreolus (Streptomyces capreolus), this protein is Zinc carboxypeptidase.